Reading from the N-terminus, the 410-residue chain is Imidazolonepropionase (410 aa).

Fe(3+) contacts are provided by histidine 71 and histidine 73. Residues histidine 71 and histidine 73 each contribute to the Zn(2+) site. 4-imidazolone-5-propanoate-binding residues include arginine 80, tyrosine 143, and histidine 175. Tyrosine 143 contacts N-formimidoyl-L-glutamate. Residue histidine 235 participates in Fe(3+) binding. Histidine 235 is a Zn(2+) binding site. Glutamate 238 is a binding site for 4-imidazolone-5-propanoate. A Fe(3+)-binding site is contributed by aspartate 309. Aspartate 309 contributes to the Zn(2+) binding site.

The protein belongs to the metallo-dependent hydrolases superfamily. HutI family. Zn(2+) serves as cofactor. Fe(3+) is required as a cofactor.

It is found in the cytoplasm. It carries out the reaction 4-imidazolone-5-propanoate + H2O = N-formimidoyl-L-glutamate. It participates in amino-acid degradation; L-histidine degradation into L-glutamate; N-formimidoyl-L-glutamate from L-histidine: step 3/3. Catalyzes the hydrolytic cleavage of the carbon-nitrogen bond in imidazolone-5-propanoate to yield N-formimidoyl-L-glutamate. It is the third step in the universal histidine degradation pathway. This is Imidazolonepropionase from Thermoplasma acidophilum (strain ATCC 25905 / DSM 1728 / JCM 9062 / NBRC 15155 / AMRC-C165).